The chain runs to 160 residues: Dysbindin domain-containing protein 1 (160 aa).

Disordered stretches follow at residues 1-34 and 95-160; these read MESP…GDTC and ADSD…PKED. Ser3, Ser97, and Ser121 each carry phosphoserine. Over residues 127–143 the composition is skewed to basic and acidic residues; sequence TRAEQNREKQTPSDPER.

The protein belongs to the dysbindin family.

The sequence is that of Dysbindin domain-containing protein 1 (Dbndd1) from Rattus norvegicus (Rat).